Here is a 119-residue protein sequence, read N- to C-terminus: Ribonuclease P protein component (119 aa).

It belongs to the RnpA family. As to quaternary structure, consists of a catalytic RNA component (M1 or rnpB) and a protein subunit.

The enzyme catalyses Endonucleolytic cleavage of RNA, removing 5'-extranucleotides from tRNA precursor.. Its function is as follows. RNaseP catalyzes the removal of the 5'-leader sequence from pre-tRNA to produce the mature 5'-terminus. It can also cleave other RNA substrates such as 4.5S RNA. The protein component plays an auxiliary but essential role in vivo by binding to the 5'-leader sequence and broadening the substrate specificity of the ribozyme. In Escherichia coli O157:H7, this protein is Ribonuclease P protein component.